The primary structure comprises 107 residues: U1-lycotoxin-Ls1t (107 aa).

The first 20 residues, 1–20 (MMKVLVVVALLVTLISYSSS), serve as a signal peptide directing secretion. Residues 21–41 (EGIDDLEADELLSLMANEQTR) constitute a propeptide that is removed on maturation. 4 disulfide bridges follow: C44–C59, C51–C68, C58–C86, and C70–C84.

This sequence belongs to the neurotoxin 19 (CSTX) family. 04 (U1-Lctx) subfamily. As to expression, expressed by the venom gland.

The protein localises to the secreted. This chain is U1-lycotoxin-Ls1t, found in Lycosa singoriensis (Wolf spider).